The primary structure comprises 499 residues: Apolipoprotein N-acyltransferase (499 aa).

The next 6 membrane-spanning stretches (helical) occupy residues 9 to 29, 50 to 70, 77 to 97, 114 to 134, 148 to 168, and 183 to 203; these read LLLG…PALL, LGYI…SIGV, FWWA…FFVS, FIFC…FTGL, ILIQ…VIYI, and LKVL…YGSV. A CN hydrolase domain is found at 220–464; that stretch reads VQPSIPQTEK…DGLIPKKLDS (245 aa). Glu259 functions as the Proton acceptor in the catalytic mechanism. The active site involves Lys322. Residue Cys372 is the Nucleophile of the active site. The helical transmembrane segment at 466 to 486 threads the bilayer; the sequence is TIFSKFGNITILLIVFFIFLV.

Belongs to the CN hydrolase family. Apolipoprotein N-acyltransferase subfamily.

The protein resides in the cell inner membrane. It carries out the reaction N-terminal S-1,2-diacyl-sn-glyceryl-L-cysteinyl-[lipoprotein] + a glycerophospholipid = N-acyl-S-1,2-diacyl-sn-glyceryl-L-cysteinyl-[lipoprotein] + a 2-acyl-sn-glycero-3-phospholipid + H(+). Its pathway is protein modification; lipoprotein biosynthesis (N-acyl transfer). Its function is as follows. Catalyzes the phospholipid dependent N-acylation of the N-terminal cysteine of apolipoprotein, the last step in lipoprotein maturation. The sequence is that of Apolipoprotein N-acyltransferase from Rickettsia bellii (strain RML369-C).